Here is a 334-residue protein sequence, read N- to C-terminus: Nucleoid-associated protein VS_0951 (334 aa).

The protein belongs to the YejK family.

Its subcellular location is the cytoplasm. The protein localises to the nucleoid. The polypeptide is Nucleoid-associated protein VS_0951 (Vibrio atlanticus (strain LGP32) (Vibrio splendidus (strain Mel32))).